The sequence spans 206 residues: Small ribosomal subunit protein uS4 (206 aa).

The 66-residue stretch at 98–163 (MRLDNIVYRL…SEKFKTFVEN (66 aa)) folds into the S4 RNA-binding domain.

The protein belongs to the universal ribosomal protein uS4 family. In terms of assembly, part of the 30S ribosomal subunit. Contacts protein S5. The interaction surface between S4 and S5 is involved in control of translational fidelity.

In terms of biological role, one of the primary rRNA binding proteins, it binds directly to 16S rRNA where it nucleates assembly of the body of the 30S subunit. With S5 and S12 plays an important role in translational accuracy. This chain is Small ribosomal subunit protein uS4, found in Clostridium beijerinckii (strain ATCC 51743 / NCIMB 8052) (Clostridium acetobutylicum).